The sequence spans 647 residues: MIHGKMKRLKRYFTRALHRIQKGPGYTYKELLVWFCDNTNTHGPKRIIKEGPKKRVMWFILTLVFAGLVFWQWGVLILTYLSYGVSVSLSIGFKTMEFPAVTLCNANPFKYSRVKPLLKELDELVATALDRIQFSSQNQGNTFTHNNQTRQNVTLDPALWNHIPLVVIDETDPRNPIIHNIFDNNAVYSKNSSIRNSSEDQTSYSQRYKVAMKLCTNNNTQCVYRNFTSGVQALREWYLLQLSSIFSNVPLSGRIDMGFKAEDLILTCLFGGQPCSYRNFTHIYDADYGNCYIFNWGQEGENTMSSANPGADFGLKLVLDIEQGEYLPFLQTTAAARLILHQQRSFPFVKDLGIYAMPGTETSISVLVDQLEHMEAPYSSCTVNGSDIPVQNLYAEFNSSYSIQSCLRSCYQEEMVKTCKCAHYQYPLPNGSEYCTNMKHPDWVPCYYSLRDSVAIRENCISLCQQPCNDTHYKMVISMADWPSAGAEDWIFHVLSYEKDSSHNITVNRNGIVRLNIYFQEFNYRSISESEATNVVWLLSNLGGQFGFWMGGSVLCIIEFGEIIIDCMWITILKFLAWSRNRRQRRKRPQYSDPPPTVSELVEAHTNSGFQHDDGDHVPVDIPGTPPPNYDSLRVNTAEPVSSDEEN.

At 1–57 (MIHGKMKRLKRYFTRALHRIQKGPGYTYKELLVWFCDNTNTHGPKRIIKEGPKKRVM) the chain is on the cytoplasmic side. Residues 58-78 (WFILTLVFAGLVFWQWGVLIL) traverse the membrane as a helical segment. Over 79-552 (TYLSYGVSVS…GGQFGFWMGG (474 aa)) the chain is Extracellular. Intrachain disulfides connect Cys-104/Cys-291, Cys-215/Cys-222, Cys-268/Cys-275, Cys-381/Cys-468, Cys-406/Cys-464, Cys-410/Cys-460, Cys-419/Cys-446, and Cys-421/Cys-435. Residues 553–573 (SVLCIIEFGEIIIDCMWITIL) form a helical membrane-spanning segment. Residues 574–647 (KFLAWSRNRR…AEPVSSDEEN (74 aa)) are Cytoplasmic-facing. The interval 586–647 (RKRPQYSDPP…AEPVSSDEEN (62 aa)) is disordered.

This sequence belongs to the amiloride-sensitive sodium channel (TC 1.A.6) family. SCNN1B subfamily. Component of the heterotrimeric epithelial sodium channel (ENaC) composed of an alpha/SCNN1A, a beta/SCNN1B and a gamma/SCNN1G subunit.

It localises to the apical cell membrane. The protein resides in the cytoplasmic vesicle membrane. The catalysed reaction is Na(+)(in) = Na(+)(out). Originally identified and characterized by its inhibition by the diuretic drug amiloride. This is one of the three pore-forming subunits of the heterotrimeric epithelial sodium channel (ENaC), a critical regulator of sodium balance and fluid homeostasis. ENaC operates in epithelial tissues, where it mediates the electrodiffusion of sodium ions from extracellular fluid through the apical membrane of cells, with water following osmotically. The chain is Epithelial sodium channel subunit beta (scnn1b-a) from Xenopus laevis (African clawed frog).